We begin with the raw amino-acid sequence, 184 residues long: Urease accessory protein UreE (184 aa).

The disordered stretch occupies residues 147–184; that stretch reads EHHGHSHSHSHSHDHDHDHDHDHQHGPSCSHGHHHGHR. Positions 157-171 are enriched in basic and acidic residues; sequence HSHDHDHDHDHDHQH.

Belongs to the UreE family.

It localises to the cytoplasm. Involved in urease metallocenter assembly. Binds nickel. Probably functions as a nickel donor during metallocenter assembly. The sequence is that of Urease accessory protein UreE from Burkholderia mallei (strain ATCC 23344).